Reading from the N-terminus, the 71-residue chain is Long neurotoxin 1 (71 aa).

Cystine bridges form between C3-C20, C14-C41, C26-C30, C45-C56, and C57-C62.

The protein belongs to the three-finger toxin family. Long-chain subfamily. Type II alpha-neurotoxin sub-subfamily. Expressed by the venom gland.

It localises to the secreted. Functionally, binds with high affinity to muscular (alpha-1/CHRNA1) and neuronal (alpha-7/CHRNA7) nicotinic acetylcholine receptor (nAChR) and hinders acetylcholine binding to the receptor, thereby impairing neuromuscular and neuronal transmission. The protein is Long neurotoxin 1 of Naja annulata annulata (Banded water cobra).